The primary structure comprises 458 residues: Phosphoglucosamine mutase (458 aa).

The active-site Phosphoserine intermediate is Ser-100. Residues Ser-100, Asp-254, Asp-256, and Asp-258 each coordinate Mg(2+). Ser-100 is modified (phosphoserine).

It belongs to the phosphohexose mutase family. Requires Mg(2+) as cofactor. Activated by phosphorylation.

The enzyme catalyses alpha-D-glucosamine 1-phosphate = D-glucosamine 6-phosphate. Its function is as follows. Catalyzes the conversion of glucosamine-6-phosphate to glucosamine-1-phosphate. This chain is Phosphoglucosamine mutase, found in Nocardia farcinica (strain IFM 10152).